Consider the following 264-residue polypeptide: MKKELLKILREKKPLVHHITNIVTVNDCANITLAIGALPVMAHALEEVEEMVSAADALVLNIGTLTNEQVEAMIKAGKAANRLKVPVILDPVGAGATKLRTQSSKKILEEVKISVIKGNSAEISILAGKGGKIRGVESQSGADDISEAAKDLANAYNVVVAVSGVTDIITDGKRIAYVKNGHPMMGTVTGTGCMLTSVVASFCGVCEDYFAATVEAFVAFGIAGERAAQSSNVKGPGSFKVTFFDEIYNLTPEIIEKDKKVEYE.

Position 41 (Met-41) interacts with substrate. Residues Lys-117 and Ser-163 each contribute to the ATP site. Residue Gly-190 coordinates substrate.

Belongs to the Thz kinase family. Mg(2+) is required as a cofactor.

It catalyses the reaction 5-(2-hydroxyethyl)-4-methylthiazole + ATP = 4-methyl-5-(2-phosphooxyethyl)-thiazole + ADP + H(+). The protein operates within cofactor biosynthesis; thiamine diphosphate biosynthesis; 4-methyl-5-(2-phosphoethyl)-thiazole from 5-(2-hydroxyethyl)-4-methylthiazole: step 1/1. Functionally, catalyzes the phosphorylation of the hydroxyl group of 4-methyl-5-beta-hydroxyethylthiazole (THZ). This Thermoanaerobacter pseudethanolicus (strain ATCC 33223 / 39E) (Clostridium thermohydrosulfuricum) protein is Hydroxyethylthiazole kinase.